We begin with the raw amino-acid sequence, 87 residues long: U3-theraphotoxin-Hhn1m (87 aa).

The signal sequence occupies residues 1 to 24; the sequence is MVNMKASMFLTFAGLVLLFVVCYA. A propeptide spanning residues 25 to 52 is cleaved from the precursor; it reads SESEEKEFPKEMLSSIFAVDNDFKQEER. Disulfide bonds link Cys-54/Cys-67, Cys-61/Cys-72, and Cys-66/Cys-79.

The protein belongs to the neurotoxin 10 (Hwtx-1) family. 51 (Hntx-8) subfamily. Hntx-8 sub-subfamily. As to expression, expressed by the venom gland.

The protein resides in the secreted. Functionally, ion channel inhibitor. The polypeptide is U3-theraphotoxin-Hhn1m (Cyriopagopus hainanus (Chinese bird spider)).